Here is a 108-residue protein sequence, read N- to C-terminus: ATP-dependent Clp protease adapter protein ClpS (108 aa).

Residues 1 to 15 (MPRESSPDSHHEHGV) show a composition bias toward basic and acidic residues. The tract at residues 1–24 (MPRESSPDSHHEHGVAVEPARPEV) is disordered.

It belongs to the ClpS family. Binds to the N-terminal domain of the chaperone ClpA.

Its function is as follows. Involved in the modulation of the specificity of the ClpAP-mediated ATP-dependent protein degradation. The chain is ATP-dependent Clp protease adapter protein ClpS from Stenotrophomonas maltophilia (strain R551-3).